We begin with the raw amino-acid sequence, 73 residues long: UPF0154 protein MYCGA5700 (73 aa).

A helical membrane pass occupies residues 5 to 25 (LALGLSIPLCLIVGAFVGYFV).

This sequence belongs to the UPF0154 family.

The protein localises to the membrane. This is UPF0154 protein MYCGA5700 from Mycoplasmoides gallisepticum (strain R(low / passage 15 / clone 2)) (Mycoplasma gallisepticum).